The primary structure comprises 187 residues: Ponticulin-like protein K (187 aa).

Residues Met1–Ser19 form the signal peptide. N-linked (GlcNAc...) asparagine glycosylation is found at Asn31, Asn70, Asn86, Asn93, Asn119, Asn128, Asn146, Asn160, and Asn161. A compositionally biased stretch (low complexity) spans Pro115–Asn146. A disordered region spans residues Pro115–Asn161. The segment covering Gln147–Asn161 has biased composition (polar residues). Residue Asn161 is the site of GPI-like-anchor amidated asparagine attachment. A propeptide spans Ser162–Ile187 (removed in mature form).

This sequence belongs to the ponticulin family. The GPI-like-anchor contains a phosphoceramide group, rather than a phosphatidyl group.

The protein resides in the cell membrane. Functionally, binds F-actin and nucleates actin assembly. The protein is Ponticulin-like protein K (ponK) of Dictyostelium discoideum (Social amoeba).